The chain runs to 248 residues: Putative glutamine amidotransferase-like protein C13C5.04 (248 aa).

Residues 13–217 (PMVEITSAYG…VKVLRGTEVF (205 aa)) form the Glutamine amidotransferase type-1 domain.

The protein is Putative glutamine amidotransferase-like protein C13C5.04 of Schizosaccharomyces pombe (strain 972 / ATCC 24843) (Fission yeast).